Here is a 338-residue protein sequence, read N- to C-terminus: Fructose-1,6-bisphosphatase class 1 (338 aa).

The Mg(2+) site is built by glutamate 94, aspartate 116, leucine 118, and aspartate 119. Substrate is bound by residues 119–122, asparagine 210, and lysine 276; that span reads DGSS. Position 282 (glutamate 282) interacts with Mg(2+).

This sequence belongs to the FBPase class 1 family. In terms of assembly, homotetramer. Mg(2+) serves as cofactor.

It localises to the cytoplasm. It catalyses the reaction beta-D-fructose 1,6-bisphosphate + H2O = beta-D-fructose 6-phosphate + phosphate. The protein operates within carbohydrate biosynthesis; gluconeogenesis. The polypeptide is Fructose-1,6-bisphosphatase class 1 (Burkholderia thailandensis (strain ATCC 700388 / DSM 13276 / CCUG 48851 / CIP 106301 / E264)).